The chain runs to 590 residues: PWWP domain-containing protein 2B (590 aa).

4 disordered regions span residues 52 to 110, 182 to 347, 360 to 398, and 426 to 467; these read APLP…PPLP, KSTL…EHEP, YLRD…PQGP, and DSLD…TVPP. Position 84 is a phosphoserine (Ser-84). The span at 99-110 shows a compositional bias: pro residues; it reads PEPPPPLVPPLP. Ser-186 and Ser-206 each carry phosphoserine. Over residues 208-217 the composition is skewed to basic and acidic residues; that stretch reads PDRELRKPEE. Residue Ser-250 is modified to Phosphoserine. Residues 296 to 305 show a composition bias toward basic and acidic residues; the sequence is VLDRESRDRP. Residues 376–385 are compositionally biased toward low complexity; the sequence is GLADLSSGSS. Ser-447 is subject to Phosphoserine. Residues 490-550 enclose the PWWP domain; sequence VGDIVWGKIH…ISKLSPFSEF (61 aa).

As to quaternary structure, component of a MTA1-specific subcomplex of the NuRD complex composed of PWWP2B, MTA1 and HDAC1 but does not contain CHD4 and MBD3. Interacts with MTA1 and HDAC1. Interacts with MTA2, MTA3, HDAC2, RBBP4, RBBP7, BRCC3 and ZNF516. Does not interact with CHD4 and MBD3. In terms of processing, deubiquitinated by BRCC3; leading to its stabilization.

Chromatin-binding protein that acts as an adapter between distinct nucleosome components (H3K36me3 or H2A.Z) and chromatin-modifying complexes, contributing to the regulation of the levels of histone acetylation at actively transcribed genes. Competes with CHD4 and MBD3 for interaction with MTA1 to form a NuRD subcomplex, preventing the formation of full NuRD complex (containing CHD4 and MBD3), leading to recruitment of HDACs to gene promoters resulting in turn in the deacetylation of nearby H3K27 and H2A.Z. Plays a role in facilitating transcriptional elongation through regulation of histone acetylation. Negatively regulates brown adipocyte thermogenesis by interacting with and stabilizing HDAC1 at the UCP1 gene promoter, thereby promoting histone deacetylation at the promoter leading to the repression of UCP1 expression. This is PWWP domain-containing protein 2B (PWWP2B) from Homo sapiens (Human).